A 484-amino-acid polypeptide reads, in one-letter code: Phosphoenolpyruvate carboxylase (484 aa).

Belongs to the PEPCase type 2 family. Homotetramer. It depends on Mg(2+) as a cofactor.

It catalyses the reaction oxaloacetate + phosphate = phosphoenolpyruvate + hydrogencarbonate. Catalyzes the irreversible beta-carboxylation of phosphoenolpyruvate (PEP) to form oxaloacetate (OAA), a four-carbon dicarboxylic acid source for the tricarboxylic acid cycle. This chain is Phosphoenolpyruvate carboxylase, found in Methanospirillum hungatei JF-1 (strain ATCC 27890 / DSM 864 / NBRC 100397 / JF-1).